A 421-amino-acid chain; its full sequence is Lipid II:glycine glycyltransferase (421 aa).

This sequence belongs to the FemABX family. Monomer.

It localises to the cytoplasm. The catalysed reaction is beta-D-GlcNAc-(1-&gt;4)-Mur2Ac(oyl-L-Ala-D-isoglutaminyl-L-Lys-D-Ala-D-Ala)-di-trans,octa-cis-undecaprenyl diphosphate + glycyl-tRNA(Gly) = beta-D-GlcNAc-(1-&gt;4)-Mur2Ac(oyl-L-Ala-D-isoglutaminyl-L-Lys-(N(6)-Gly)-D-Ala-D-Ala)-di-trans,octa-cis-undecaprenyl diphosphate + tRNA(Gly) + H(+). In terms of biological role, catalyzes the incorporation of the first glycine of the pentaglycine interpeptide bridge, which is characteristic of the S.aureus peptidoglycan. This glycine is added to the epsilon-amino group of the L-lysine of the membrane-bound lipid II intermediate (GlcNAc-(beta-1,4)-N-acetylmuramic acid(-L-Ala-D-iGln-L-Lys-D-Ala-D-Ala)-pyrophosphoryl-undecaprenol), using glycyl-tRNA(Gly) as donor, in a ribosome-independent mechanism. Involved in methicillin resistance. This chain is Lipid II:glycine glycyltransferase (femX), found in Staphylococcus aureus (strain Mu50 / ATCC 700699).